Reading from the N-terminus, the 564-residue chain is MFS-type efflux pump LUC4 (564 aa).

Residues 1–15 (MGQSQDNTQLTTASP) show a composition bias toward polar residues. The interval 1–35 (MGQSQDNTQLTTASPQAEKDLSSNDNPPESEPAAP) is disordered. Helical transmembrane passes span 42 to 62 (WLVF…TSII), 78 to 98 (LYVW…PIFA), 108 to 128 (SLTL…GGAH), 141 to 161 (GVGG…MVSV), and 170 to 190 (IIGG…GAFA). Asparagine 192 carries N-linked (GlcNAc...) asparagine glycosylation. 3 helical membrane passes run 197 to 217 (WIFY…IVFL), 236 to 256 (WGGS…LSWG), and 268 to 288 (LVPL…QGAP). The N-linked (GlcNAc...) asparagine glycan is linked to asparagine 302. 5 helical membrane passes run 308-328 (LFVI…FLPV), 343-363 (VMLF…GIFI), 371-391 (VWHF…TLLD), 404-424 (LLFG…ILAS), and 436-456 (AWTF…AAAF). The N-linked (GlcNAc...) asparagine glycan is linked to asparagine 461. The chain crosses the membrane as a helical span at residues 512 to 532 (KLVWQVSIAFSVLGFVLAFLV).

The protein belongs to the major facilitator superfamily. TCR/Tet family.

It is found in the membrane. Functionally, MFS-type efflux pump; part of the gene cluster that mediates the biosynthesis of the mycotoxin lucilactaene and the lucilactaene-related compound NG-391 that act as cell cycle inhibitors with potent growth inhibitory activity against malarial parasites, moderate growth inhibitory activity against cancer cells, and no activity against bacteria and fungi. This is MFS-type efflux pump LUC4 from Fusarium sp.